Consider the following 1295-residue polypeptide: Protein FORGETTER 1 (1295 aa).

3 stretches are compositionally biased toward pro residues: residues 1–14 (MTQS…PLPA), 75–89 (PQQP…PPPI), and 162–177 (PPTP…PPPE). Disordered regions lie at residues 1–20 (MTQS…HSAA), 68–107 (RPQF…PAHG), 153–204 (LTAS…MDYR), and 626–688 (PEQP…NDSD). Over residues 178–193 (EVNEEAIEVEREEDEG) the composition is skewed to acidic residues. The Nuclear localization signal signature appears at 643-650 (RKRHSASP). The segment covering 669-688 (DNESDLESEADSADDSNDSD) has biased composition (acidic residues). The PHD-type zinc finger occupies 691-741 (FQICQICSGEDERKKLLHCSECDKLFHPDCVVPPVIDLPSEAWICFSCKEK).

Belongs to the SBNO family. Interacts with SWI/SNF and ISWI chromatin remodelers such as BRM, CHR11 and CHR17. Binds to histone H3.

The protein localises to the nucleus. In terms of biological role, required for normal embryo development. Necessary to acquire heat stress (HS) memory, by modulating nucleosome occupancy and regulating heat-induced gene expression. Associates globally with the nucleosome-poor regions flanking the transcription units of expressed genes. Binds to the promoter regions, primarily to the proximal promoter just upstream of the transcriptional start sites (TSS) and somewhat more weakly to the region downstream of the transcription termination site (TTS), of actively expressed genes (e.g. HSA32, HSP18.2 and HSP22.0) in a heat-dependent fashion. The sequence is that of Protein FORGETTER 1 from Arabidopsis thaliana (Mouse-ear cress).